A 367-amino-acid polypeptide reads, in one-letter code: Type II methyltransferase M.CviJI (367 aa).

The SAM-dependent MTase C5-type domain occupies 3-367 (FRTLELFAGI…EYLGYLVQYD (365 aa)). The active site involves C73.

The protein belongs to the class I-like SAM-binding methyltransferase superfamily. C5-methyltransferase family.

The enzyme catalyses a 2'-deoxycytidine in DNA + S-adenosyl-L-methionine = a 5-methyl-2'-deoxycytidine in DNA + S-adenosyl-L-homocysteine + H(+). In terms of biological role, a methylase that recognizes the double-stranded sequence 5'-RGCY-3', methylates C-3 on both strands, and protects the DNA from cleavage by the CviJI endonuclease. The sequence is that of Type II methyltransferase M.CviJI from Chlorella (PBCV-IL3A).